Here is a 266-residue protein sequence, read N- to C-terminus: Methylsterol monooxygenase 2-2 (266 aa).

A run of 3 helical transmembrane segments spans residues 24–44 (IGSFLLHESVFFLSGLPFIFL), 71–91 (RLLLYHFSVNLPLMLASYPVF), and 107–127 (EVSAQILFYFIIEDFVFYWGH). The region spanning 113-247 (LFYFIIEDFV…FVYMDWIFGT (135 aa)) is the Fatty acid hydroxylase domain. The Histidine box-1 motif lies at 127 to 131 (HRILH). Positions 140–144 (HSVHH) match the Histidine box-2 motif. A helical membrane pass occupies residues 162-182 (ILFLGFATIVGPALTGPHLIT). The short motif at 219 to 225 (FHDYHHR) is the Histidine box-3 element.

Belongs to the sterol desaturase family. Fe cation serves as cofactor. As to expression, expressed in shoots, roots, siliques and flowers, and, slightly, in developing seeds.

The protein resides in the endoplasmic reticulum membrane. It catalyses the reaction 4,4-dimethyl-5alpha-cholest-7-en-3beta-ol + 6 Fe(II)-[cytochrome b5] + 3 O2 + 5 H(+) = 4alpha-carboxy-4beta-methyl-5alpha-cholest-7-ene-3beta-ol + 6 Fe(III)-[cytochrome b5] + 4 H2O. The catalysed reaction is 24-methylidenelophenol + 6 Fe(II)-[cytochrome b5] + 3 O2 + 5 H(+) = 4alpha-carboxy-ergosta-7,24(24(1))-dien-3beta-ol + 6 Fe(III)-[cytochrome b5] + 4 H2O. Functionally, non-heme iron oxygenase involved in sterols biosynthesis by catalyzing the removal of the second methyl group at the C-4 position. 24-ethylidenelophenol and 24-ethyllophenol are the preferred substrates. Together with SMO2-1, required during embryogenesis, probably by maintaining sterols and auxin homeostasis. The sequence is that of Methylsterol monooxygenase 2-2 from Arabidopsis thaliana (Mouse-ear cress).